Consider the following 141-residue polypeptide: Endoribonuclease YbeY (141 aa).

Zn(2+) contacts are provided by His107, His111, and Asp117.

It belongs to the endoribonuclease YbeY family. It depends on Zn(2+) as a cofactor.

Its subcellular location is the cytoplasm. Single strand-specific metallo-endoribonuclease involved in late-stage 70S ribosome quality control and in maturation of the 3' terminus of the 16S rRNA. In Endomicrobium trichonymphae, this protein is Endoribonuclease YbeY.